A 101-amino-acid chain; its full sequence is Large ribosomal subunit protein bL21 (101 aa).

It belongs to the bacterial ribosomal protein bL21 family. In terms of assembly, part of the 50S ribosomal subunit. Contacts protein L20.

Its function is as follows. This protein binds to 23S rRNA in the presence of protein L20. In Micrococcus luteus (strain ATCC 4698 / DSM 20030 / JCM 1464 / CCM 169 / CCUG 5858 / IAM 1056 / NBRC 3333 / NCIMB 9278 / NCTC 2665 / VKM Ac-2230) (Micrococcus lysodeikticus), this protein is Large ribosomal subunit protein bL21.